The primary structure comprises 590 residues: Aspartate--tRNA ligase (590 aa).

An L-aspartate-binding site is contributed by Glu-174. An aspartate region spans residues 198-201 (QLMK). Residue Arg-220 participates in L-aspartate binding. Residues 220 to 222 (RDE) and Gln-229 contribute to the ATP site. Residue His-443 coordinates L-aspartate. ATP is bound at residue Glu-484. Arg-491 contacts L-aspartate. 536–539 (GLDR) is a binding site for ATP.

It belongs to the class-II aminoacyl-tRNA synthetase family. Type 1 subfamily. Homodimer.

The protein resides in the cytoplasm. It catalyses the reaction tRNA(Asp) + L-aspartate + ATP = L-aspartyl-tRNA(Asp) + AMP + diphosphate. Functionally, catalyzes the attachment of L-aspartate to tRNA(Asp) in a two-step reaction: L-aspartate is first activated by ATP to form Asp-AMP and then transferred to the acceptor end of tRNA(Asp). This chain is Aspartate--tRNA ligase, found in Lactococcus lactis subsp. lactis (strain IL1403) (Streptococcus lactis).